The following is a 687-amino-acid chain: Putative ammonium transporter 3 (687 aa).

The next 11 membrane-spanning stretches (helical) occupy residues 39–59, 77–97, 134–154, 162–182, 196–216, 240–260, 272–292, 299–319, 323–343, 352–372, and 404–424; these read AVWIISSSFIIFTMHSGFGLL, VVDVVFGGLSYWSCGFGFSYG, ASFLFQLSLATTASTIVSGAV, SYILLGCIVILIQALPAHWVW, FAGCSAVHLVGGIIGLIATVF, LGTFLLWWGWFGINAGSVWGI, AVATIMASIGGGATAITISFV, VNFLINGILSSIVSITAICAV, WHALVIGSISSVFSIAVLPLL, VGIVPIHLTSSIWGMIAVGIF, and CTAAILIYSATTGFLALFLIS. Disordered stretches follow at residues 521–544, 549–568, and 592–687; these read RTNATESNGTGAPKRSNGPAFNNQ, AVSSTVSTARNGPSTGRRTE, and PPEE…NPPV. The segment covering 549 to 564 has biased composition (polar residues); sequence AVSSTVSTARNGPSTG. Composition is skewed to low complexity over residues 614 to 632 and 648 to 665; these read SPSSSTSRRSISIRSSPSI and STASATSIISKKSSKNST.

Belongs to the ammonia transporter channel (TC 1.A.11.2) family.

The protein resides in the membrane. Involved in the uptake of ammonia. This chain is Putative ammonium transporter 3 (amt-3), found in Caenorhabditis elegans.